The following is an 813-amino-acid chain: MIHNDTVADAKANPDLEQPYHELGLKDDEYARIKELLGRRPTDAELAMYSVMWSEHCSYKSSKTHLRYFGETTTEEMKSKMLAGIGENAGVIDIGDGHAVTFKVESHNHPSYVEPYQGAATGVGGIVRDIMAMGARPVAVMDQLRFGPADLPDTQRVLPGVVAGVGGYGNSLGLPNIGGETVFDATYAGNPLVNALCVGTLKTEDLKLAFASGKGNRVILFGSRTGLDGIGGVSVLASDTFEEGAERKLPAVQVGDPFAEKVLIECCLDLYRANVVVGIQDLGGAGLSCATAELASAGDGGMHINLDNVHLRAEGMTAAEILSSESQERMCAVVEPENVDAFMEICRKWDVLASDIGCVTDGEHLVIEHCGEIVVDASAHTMAEEGPVYERPYERPAEQDELNEPRGVELPETSQEVRQQILDLAASPALCSREFITEQYDRYVRGNTVAAKDADAGVLRIDEETGRGIAVSTDASGRYARLDPRTGAQLALAEAYRNVSVTGATPVAVSNCLNFGSPEDPGVMWQFREAVHGLADGCKEMGIPVTGGNVSFYNQTGDTAILPTPVIAVLGTIDDCARRIPQQLPKQAGAEAGADESQEQYHLVLVGAETREELGGSIWQQVVHDELAGLPPQVDLSVEQRLGAFITDQRDKIVAAHDLSEGGLSQAVVELAIQSGRGMAVNPMLSQHESAVAQGRTLAQQAAVGLFSETASRVLLAVRSEDYGDLMRDLAETGLTGGWIGLTGVSDAAGQPVIRFGSGVYPVLPFGGEIELDPAKQHDDDFDIVISLDEAETAWKSTLPALFSHAAGNNSVI.

Histidine 56 is an active-site residue. Positions 59 and 103 each coordinate ATP. Glutamate 105 is a Mg(2+) binding site. Residues 106–109 and arginine 128 each bind substrate; that span reads SHNH. The Proton acceptor role is filled by histidine 107. Aspartate 129 provides a ligand contact to Mg(2+). Glutamine 253 is a binding site for substrate. Aspartate 281 contacts Mg(2+). 325–327 lines the substrate pocket; the sequence is ESQ. ATP contacts are provided by asparagine 511 and glycine 548. Residue asparagine 549 participates in Mg(2+) binding. Residue serine 551 participates in substrate binding.

It belongs to the FGAMS family. As to quaternary structure, monomer. Part of the FGAM synthase complex composed of 1 PurL, 1 PurQ and 2 PurS subunits.

It localises to the cytoplasm. The enzyme catalyses N(2)-formyl-N(1)-(5-phospho-beta-D-ribosyl)glycinamide + L-glutamine + ATP + H2O = 2-formamido-N(1)-(5-O-phospho-beta-D-ribosyl)acetamidine + L-glutamate + ADP + phosphate + H(+). It participates in purine metabolism; IMP biosynthesis via de novo pathway; 5-amino-1-(5-phospho-D-ribosyl)imidazole from N(2)-formyl-N(1)-(5-phospho-D-ribosyl)glycinamide: step 1/2. Its function is as follows. Part of the phosphoribosylformylglycinamidine synthase complex involved in the purines biosynthetic pathway. Catalyzes the ATP-dependent conversion of formylglycinamide ribonucleotide (FGAR) and glutamine to yield formylglycinamidine ribonucleotide (FGAM) and glutamate. The FGAM synthase complex is composed of three subunits. PurQ produces an ammonia molecule by converting glutamine to glutamate. PurL transfers the ammonia molecule to FGAR to form FGAM in an ATP-dependent manner. PurS interacts with PurQ and PurL and is thought to assist in the transfer of the ammonia molecule from PurQ to PurL. This chain is Phosphoribosylformylglycinamidine synthase subunit PurL, found in Corynebacterium jeikeium (strain K411).